A 271-amino-acid chain; its full sequence is 3-methyl-2-oxobutanoate hydroxymethyltransferase (271 aa).

Mg(2+) is bound by residues Asp-51 and Asp-90. 3-methyl-2-oxobutanoate-binding positions include 51 to 52, Asp-90, and Lys-118; that span reads DS. Glu-120 contacts Mg(2+). The active-site Proton acceptor is Glu-186.

Belongs to the PanB family. In terms of assembly, homodecamer; pentamer of dimers. Requires Mg(2+) as cofactor.

It localises to the cytoplasm. The enzyme catalyses 3-methyl-2-oxobutanoate + (6R)-5,10-methylene-5,6,7,8-tetrahydrofolate + H2O = 2-dehydropantoate + (6S)-5,6,7,8-tetrahydrofolate. The protein operates within cofactor biosynthesis; (R)-pantothenate biosynthesis; (R)-pantoate from 3-methyl-2-oxobutanoate: step 1/2. Functionally, catalyzes the reversible reaction in which hydroxymethyl group from 5,10-methylenetetrahydrofolate is transferred onto alpha-ketoisovalerate to form ketopantoate. The protein is 3-methyl-2-oxobutanoate hydroxymethyltransferase of Stenotrophomonas maltophilia (strain R551-3).